We begin with the raw amino-acid sequence, 1526 residues long: Myosin type-2 heavy chain 1 (1526 aa).

One can recognise a Myosin N-terminal SH3-like domain in the interval 22–73 (DDKRWVWISDPETAFTKAWIKEDLPDKKYVVRYNNSRDEKIVGEDEIDPVNP). The 679-residue stretch at 77–755 (DRVNDMAELT…VLAELEERRV (679 aa)) folds into the Myosin motor domain. Residue 170-177 (GESGAGKT) coordinates ATP. 2 actin-binding regions span residues 634-656 (LNQL…VPNE) and 734-748 (RIGV…GVLA). The IQ domain occupies 758 to 787 (LQRLMTMLQTRIRGFLQRKIFQKRLKDIQA). Positions 875–1244 (ALDKEEILRR…SLTKQVNELS (370 aa)) form a coiled coil. The residue at position 1044 (Ser-1044) is a Phosphoserine.

Belongs to the TRAFAC class myosin-kinesin ATPase superfamily. Myosin family. As to quaternary structure, binds to cdc4 and rlc1.

Required for cell division. It is a component of the cdc12 'spot', a structure thought to mark the site of septation. May work in conjunction with myo3. This Schizosaccharomyces pombe (strain 972 / ATCC 24843) (Fission yeast) protein is Myosin type-2 heavy chain 1 (myo2).